The chain runs to 353 residues: Photosystem II protein D1 (353 aa).

Thr-2 bears the N-acetylthreonine mark. The residue at position 2 (Thr-2) is a Phosphothreonine. The next 3 membrane-spanning stretches (helical) occupy residues 29–46 (YIGWFGVLMIPTLLTATS), 118–133 (HFLLGVACYMGREWEL), and 142–156 (WIAVAYSAPVAAATA). His-118 provides a ligand contact to chlorophyll a. Tyr-126 contributes to the pheophytin a binding site. The [CaMn4O5] cluster site is built by Asp-170 and Glu-189. A helical membrane pass occupies residues 197–218 (FHMLGVAGVFGGSLFSAMHGSL). His-198 contributes to the chlorophyll a binding site. Residues His-215 and 264–265 (SF) each bind a quinone. His-215 lines the Fe cation pocket. His-272 contributes to the Fe cation binding site. Residues 274 to 288 (FLAAWPVVGIWFTAL) form a helical membrane-spanning segment. Positions 332, 333, 342, and 344 each coordinate [CaMn4O5] cluster. Residues 345-353 (SVEAPSINA) constitute a propeptide that is removed on maturation.

This sequence belongs to the reaction center PufL/M/PsbA/D family. PSII is composed of 1 copy each of membrane proteins PsbA, PsbB, PsbC, PsbD, PsbE, PsbF, PsbH, PsbI, PsbJ, PsbK, PsbL, PsbM, PsbT, PsbX, PsbY, PsbZ, Psb30/Ycf12, at least 3 peripheral proteins of the oxygen-evolving complex and a large number of cofactors. It forms dimeric complexes. The cofactor is The D1/D2 heterodimer binds P680, chlorophylls that are the primary electron donor of PSII, and subsequent electron acceptors. It shares a non-heme iron and each subunit binds pheophytin, quinone, additional chlorophylls, carotenoids and lipids. D1 provides most of the ligands for the Mn4-Ca-O5 cluster of the oxygen-evolving complex (OEC). There is also a Cl(-1) ion associated with D1 and D2, which is required for oxygen evolution. The PSII complex binds additional chlorophylls, carotenoids and specific lipids.. Tyr-161 forms a radical intermediate that is referred to as redox-active TyrZ, YZ or Y-Z. Post-translationally, C-terminally processed by CTPA; processing is essential to allow assembly of the oxygen-evolving complex and thus photosynthetic growth.

It localises to the plastid. The protein resides in the chloroplast thylakoid membrane. It carries out the reaction 2 a plastoquinone + 4 hnu + 2 H2O = 2 a plastoquinol + O2. In terms of biological role, photosystem II (PSII) is a light-driven water:plastoquinone oxidoreductase that uses light energy to abstract electrons from H(2)O, generating O(2) and a proton gradient subsequently used for ATP formation. It consists of a core antenna complex that captures photons, and an electron transfer chain that converts photonic excitation into a charge separation. The D1/D2 (PsbA/PsbD) reaction center heterodimer binds P680, the primary electron donor of PSII as well as several subsequent electron acceptors. The protein is Photosystem II protein D1 of Chara vulgaris (Common stonewort).